The sequence spans 448 residues: Nucleoprotein (448 aa).

The segment at 1-55 (MSFTPGKQSSSRASSGNRSGNGILKWADQSDQSRNVQTRGRRAQPKQTATSQQPS) is disordered. The segment covering 9-22 (SSSRASSGNRSGNG) has biased composition (low complexity). Polar residues-rich tracts occupy residues 29–38 (QSDQSRNVQT) and 45–55 (PKQTATSQQPS). The segment at 52–194 (QQPSGGNVVP…GYYIEGSGRS (143 aa)) is RNA-binding. Residues 61 to 190 (PYYSWFSGIT…VLPQGYYIEG (130 aa)) form the CoV N NTD domain. Positions 106, 122, and 164 each coordinate RNA. 3 disordered regions span residues 157–231 (TPAD…VTPD), 266–298 (ILNKPRQKRSPNKQCTVQQCFGKRGPNQNFGGG), and 385–448 (GMMN…TSEI). Phosphoserine; by host is present on serine 167. The residue at position 174 (threonine 174) is a Phosphothreonine; by host. Serine 191 is modified (phosphoserine; by host). Low complexity predominate over residues 193–214 (RSAPNSRSTSRASSRASSAGSR). The CoV N CTD domain occupies 259 to 384 (AKEIRQKILN…ENLNAYQQQD (126 aa)). Residues 266–276 (ILNKPRQKRSP) show a composition bias toward basic residues. A dimerization region spans residues 266-384 (ILNKPRQKRS…ENLNAYQQQD (119 aa)). A Phosphoserine; by host modification is found at serine 390. Residues 399-409 (QKNGQGENDNI) show a composition bias toward polar residues. The span at 422-439 (KSRELTAEDISLLKKMDE) shows a compositional bias: basic and acidic residues. Residue serine 423 is modified to Phosphoserine; by host. At threonine 427 the chain carries Phosphothreonine; by host.

It belongs to the betacoronavirus nucleocapsid protein family. In terms of assembly, homooligomer. Both monomeric and oligomeric forms interact with RNA. Interacts with protein M. Interacts with NSP3; this interaction serves to tether the genome to the newly translated replicase-transcriptase complex at a very early stage of infection. In terms of processing, ADP-ribosylated. The ADP-ribosylation is retained in the virion during infection. Phosphorylated on serine and threonine residues.

Its subcellular location is the virion. The protein resides in the host endoplasmic reticulum-Golgi intermediate compartment. The protein localises to the host Golgi apparatus. Functionally, packages the positive strand viral genome RNA into a helical ribonucleocapsid (RNP) and plays a fundamental role during virion assembly through its interactions with the viral genome and membrane protein M. Plays an important role in enhancing the efficiency of subgenomic viral RNA transcription as well as viral replication. This chain is Nucleoprotein, found in Bovine coronavirus (strain LY-138) (BCoV).